The sequence spans 457 residues: Bifunctional protein GlmU (457 aa).

Residues 1-230 (MPLSLPLHIV…PREVEGVNDL (230 aa)) are pyrophosphorylase. Residues 12-15 (LAAG), Lys26, Gln78, 83-84 (GT), 105-107 (YGD), Gly140, Glu155, Asn170, and Asn228 contribute to the UDP-N-acetyl-alpha-D-glucosamine site. Asp107 contacts Mg(2+). Asn228 is a binding site for Mg(2+). Positions 231–251 (WQLTQLERTWQIRAARALCLQ) are linker. The N-acetyltransferase stretch occupies residues 252-457 (GARVADPARL…DGWQRPKKKT (206 aa)). Arg334 and Lys352 together coordinate UDP-N-acetyl-alpha-D-glucosamine. His364 (proton acceptor) is an active-site residue. Residues Tyr367 and Asn378 each coordinate UDP-N-acetyl-alpha-D-glucosamine. Residues Ala381, 387–388 (NY), Ser406, Ala424, and Arg441 each bind acetyl-CoA.

This sequence in the N-terminal section; belongs to the N-acetylglucosamine-1-phosphate uridyltransferase family. The protein in the C-terminal section; belongs to the transferase hexapeptide repeat family. Homotrimer. It depends on Mg(2+) as a cofactor.

It is found in the cytoplasm. The catalysed reaction is alpha-D-glucosamine 1-phosphate + acetyl-CoA = N-acetyl-alpha-D-glucosamine 1-phosphate + CoA + H(+). It catalyses the reaction N-acetyl-alpha-D-glucosamine 1-phosphate + UTP + H(+) = UDP-N-acetyl-alpha-D-glucosamine + diphosphate. It functions in the pathway nucleotide-sugar biosynthesis; UDP-N-acetyl-alpha-D-glucosamine biosynthesis; N-acetyl-alpha-D-glucosamine 1-phosphate from alpha-D-glucosamine 6-phosphate (route II): step 2/2. The protein operates within nucleotide-sugar biosynthesis; UDP-N-acetyl-alpha-D-glucosamine biosynthesis; UDP-N-acetyl-alpha-D-glucosamine from N-acetyl-alpha-D-glucosamine 1-phosphate: step 1/1. It participates in bacterial outer membrane biogenesis; LPS lipid A biosynthesis. Functionally, catalyzes the last two sequential reactions in the de novo biosynthetic pathway for UDP-N-acetylglucosamine (UDP-GlcNAc). The C-terminal domain catalyzes the transfer of acetyl group from acetyl coenzyme A to glucosamine-1-phosphate (GlcN-1-P) to produce N-acetylglucosamine-1-phosphate (GlcNAc-1-P), which is converted into UDP-GlcNAc by the transfer of uridine 5-monophosphate (from uridine 5-triphosphate), a reaction catalyzed by the N-terminal domain. The protein is Bifunctional protein GlmU of Xylella fastidiosa (strain M12).